Reading from the N-terminus, the 189-residue chain is Orcokinin peptides (189 aa).

The N-terminal stretch at 1–21 (MRGAGGALAVAVAALLVCCSA) is a signal peptide. 2 propeptides span residues 22 to 124 (DPHQ…TFVK) and 145 to 174 (FYHLSSFDKKRYRADYPMDEIDLSHFPIGS).

The protein belongs to the orcokinin family. Orcokinin-like peptide: Expressed in corpora cardiaca (CC), corpora allata (CA), antennal lobe (AL) and gnathal ganglion (GNG) (at protein level). Expression in CC, CA and GNG detected in some animals, in AL in few animals (at protein level). Orcokinin-like peptide precursor-related peptide: Expressed in corpora cardiaca (CC), corpora allata (CA), antennal lobe (AL) and gnathal ganglion (GNG) (at protein level). Expression in GNG detected in most animals, expression in CC, CA and AL detected in some animals (at protein level).

It localises to the secreted. Myotropic peptides. The protein is Orcokinin peptides of Agrotis ipsilon (Black cutworm moth).